The chain runs to 287 residues: 4-hydroxybenzoate octaprenyltransferase (287 aa).

A run of 9 helical transmembrane segments spans residues 21 to 41, 44 to 64, 91 to 111, 112 to 132, 139 to 159, 160 to 180, 211 to 231, 235 to 255, and 263 to 283; these read VGIF…AKGA, FKIA…GCIV, VTEA…LVLL, LNRL…VYPF, LPQL…FAAT, VGHV…WPIV, LMIG…GWYL, YWFY…QFLI, and CFAA…GILL.

It belongs to the UbiA prenyltransferase family. Mg(2+) is required as a cofactor.

The protein localises to the cell inner membrane. The catalysed reaction is all-trans-octaprenyl diphosphate + 4-hydroxybenzoate = 4-hydroxy-3-(all-trans-octaprenyl)benzoate + diphosphate. The protein operates within cofactor biosynthesis; ubiquinone biosynthesis. Catalyzes the prenylation of para-hydroxybenzoate (PHB) with an all-trans polyprenyl group. Mediates the second step in the final reaction sequence of ubiquinone-8 (UQ-8) biosynthesis, which is the condensation of the polyisoprenoid side chain with PHB, generating the first membrane-bound Q intermediate 3-octaprenyl-4-hydroxybenzoate. This Coxiella burnetii (strain CbuG_Q212) (Coxiella burnetii (strain Q212)) protein is 4-hydroxybenzoate octaprenyltransferase.